Reading from the N-terminus, the 194-residue chain is ATP-dependent Clp protease proteolytic subunit (194 aa).

The active-site Nucleophile is the Ser97. His122 is a catalytic residue.

The protein belongs to the peptidase S14 family. As to quaternary structure, fourteen ClpP subunits assemble into 2 heptameric rings which stack back to back to give a disk-like structure with a central cavity, resembling the structure of eukaryotic proteasomes.

Its subcellular location is the cytoplasm. The enzyme catalyses Hydrolysis of proteins to small peptides in the presence of ATP and magnesium. alpha-casein is the usual test substrate. In the absence of ATP, only oligopeptides shorter than five residues are hydrolyzed (such as succinyl-Leu-Tyr-|-NHMec, and Leu-Tyr-Leu-|-Tyr-Trp, in which cleavage of the -Tyr-|-Leu- and -Tyr-|-Trp bonds also occurs).. Functionally, cleaves peptides in various proteins in a process that requires ATP hydrolysis. Has a chymotrypsin-like activity. Plays a major role in the degradation of misfolded proteins. The sequence is that of ATP-dependent Clp protease proteolytic subunit from Carsonella ruddii (strain PV).